A 327-amino-acid polypeptide reads, in one-letter code: Polyadenylate-binding protein-interacting protein 9 (327 aa).

The PAM2-like motif lies at 59 to 69 (KLNPLAKEFFP). Residues 97-113 (KQSGEEFDLDAKKDDNT) are compositionally biased toward basic and acidic residues. The interval 97–132 (KQSGEEFDLDAKKDDNTRKRRNYSQGRRRLTGRISK) is disordered. Residues 114–125 (RKRRNYSQGRRR) carry the Bipartite nuclear localization signal motif. Over residues 114–127 (RKRRNYSQGRRRLT) the composition is skewed to basic residues. RRM domains are found at residues 141–216 (RTVY…PSKT) and 238–314 (RTIY…PSKT). The disordered stretch occupies residues 308-327 (RVSPSKTPVRPRITRPPSTN).

It is found in the nucleus. This Arabidopsis thaliana (Mouse-ear cress) protein is Polyadenylate-binding protein-interacting protein 9 (CID9).